The primary structure comprises 440 residues: 23S rRNA (uracil(1939)-C(5))-methyltransferase RlmD (440 aa).

Residues 6 to 64 (PIHNAQPEQVFIESLDTEGRGIARVEGKVLFVDGALPGERVWARRTQNHKSFDRAELLQ) enclose the TRAM domain. [4Fe-4S] cluster-binding residues include Cys-77, Cys-83, Cys-86, and Cys-164. 6 residues coordinate S-adenosyl-L-methionine: Gln-273, Phe-302, Asn-307, Glu-323, Asp-351, and Asp-372. The active-site Nucleophile is Cys-397.

It belongs to the class I-like SAM-binding methyltransferase superfamily. RNA M5U methyltransferase family. RlmD subfamily.

The enzyme catalyses uridine(1939) in 23S rRNA + S-adenosyl-L-methionine = 5-methyluridine(1939) in 23S rRNA + S-adenosyl-L-homocysteine + H(+). In terms of biological role, catalyzes the formation of 5-methyl-uridine at position 1939 (m5U1939) in 23S rRNA. The protein is 23S rRNA (uracil(1939)-C(5))-methyltransferase RlmD of Acidithiobacillus ferrooxidans (strain ATCC 23270 / DSM 14882 / CIP 104768 / NCIMB 8455) (Ferrobacillus ferrooxidans (strain ATCC 23270)).